The sequence spans 403 residues: CCA-adding enzyme (403 aa).

Gly-32 and Arg-35 together coordinate ATP. CTP-binding residues include Gly-32 and Arg-35. Mg(2+) is bound by residues Asp-45 and Asp-47. ATP-binding residues include Arg-116, Asp-159, Arg-162, Arg-165, and Arg-168. CTP contacts are provided by Arg-116, Asp-159, Arg-162, Arg-165, and Arg-168.

The protein belongs to the tRNA nucleotidyltransferase/poly(A) polymerase family. Bacterial CCA-adding enzyme type 3 subfamily. As to quaternary structure, homodimer. Mg(2+) is required as a cofactor.

The enzyme catalyses a tRNA precursor + 2 CTP + ATP = a tRNA with a 3' CCA end + 3 diphosphate. It carries out the reaction a tRNA with a 3' CCA end + 2 CTP + ATP = a tRNA with a 3' CCACCA end + 3 diphosphate. In terms of biological role, catalyzes the addition and repair of the essential 3'-terminal CCA sequence in tRNAs without using a nucleic acid template. Adds these three nucleotides in the order of C, C, and A to the tRNA nucleotide-73, using CTP and ATP as substrates and producing inorganic pyrophosphate. tRNA 3'-terminal CCA addition is required both for tRNA processing and repair. Also involved in tRNA surveillance by mediating tandem CCA addition to generate a CCACCA at the 3' terminus of unstable tRNAs. While stable tRNAs receive only 3'-terminal CCA, unstable tRNAs are marked with CCACCA and rapidly degraded. This is CCA-adding enzyme from Streptococcus suis (strain 98HAH33).